The following is a 535-amino-acid chain: T-complex protein 1 subunit zeta 1 (535 aa).

Belongs to the TCP-1 chaperonin family. In terms of assembly, heterooligomeric complex of about 850 to 900 kDa that forms two stacked rings, 12 to 16 nm in diameter.

Its subcellular location is the cytoplasm. Molecular chaperone; assists the folding of proteins upon ATP hydrolysis. Known to play a role, in vitro, in the folding of actin and tubulin. The protein is T-complex protein 1 subunit zeta 1 of Arabidopsis thaliana (Mouse-ear cress).